The sequence spans 180 residues: ATP-dependent protease subunit HslV (180 aa).

Residue Thr6 is part of the active site. Positions 164, 167, and 170 each coordinate Na(+).

It belongs to the peptidase T1B family. HslV subfamily. In terms of assembly, a double ring-shaped homohexamer of HslV is capped on each side by a ring-shaped HslU homohexamer. The assembly of the HslU/HslV complex is dependent on binding of ATP.

The protein localises to the cytoplasm. The enzyme catalyses ATP-dependent cleavage of peptide bonds with broad specificity.. Allosterically activated by HslU binding. In terms of biological role, protease subunit of a proteasome-like degradation complex believed to be a general protein degrading machinery. The protein is ATP-dependent protease subunit HslV of Borrelia duttonii (strain Ly).